We begin with the raw amino-acid sequence, 430 residues long: Protein translocase subunit SecY (430 aa).

The next 10 membrane-spanning stretches (helical) occupy residues 18-38 (IFFTLAMLVIFKIGTYIPAPG), 68-88 (FSIFAMGIVPYITASIVMQLL), 117-137 (LAISLAFIQSIGMAFQFNNYL), 147-167 (IMSYLLIALVLTAGTAFLIWL), 179-199 (GISIIIFAGILSTLPASLIQF), 217-237 (VLGLLVSLILLTVGAIYVLEA), 269-289 (GVIPVIFAMAFFLLPRTLTLF), 308-328 (NVGMVVYIVLIILFTYFYAFV), 368-388 (FVGSIFLAVISILPILATKFM), and 389-409 (GLPQSIQIGGTSLLIVIGVAI).

This sequence belongs to the SecY/SEC61-alpha family. In terms of assembly, component of the Sec protein translocase complex. Heterotrimer consisting of SecY, SecE and SecG subunits. The heterotrimers can form oligomers, although 1 heterotrimer is thought to be able to translocate proteins. Interacts with the ribosome. Interacts with SecDF, and other proteins may be involved. Interacts with SecA.

The protein resides in the cell membrane. The central subunit of the protein translocation channel SecYEG. Consists of two halves formed by TMs 1-5 and 6-10. These two domains form a lateral gate at the front which open onto the bilayer between TMs 2 and 7, and are clamped together by SecE at the back. The channel is closed by both a pore ring composed of hydrophobic SecY resides and a short helix (helix 2A) on the extracellular side of the membrane which forms a plug. The plug probably moves laterally to allow the channel to open. The ring and the pore may move independently. In Staphylococcus aureus (strain NCTC 8325 / PS 47), this protein is Protein translocase subunit SecY.